Consider the following 427-residue polypeptide: Forkhead box protein A1-B (427 aa).

Positions 157–251 form a DNA-binding region, fork-head; it reads KPPYSYISLI…ENGCYLRRQK (95 aa). The segment covering 256 to 272 has biased composition (basic and acidic residues); sequence EKTQGGKGNQDGRKDHS. Positions 256-336 are disordered; sequence EKTQGGKGNQ…HQNHSTHSLA (81 aa). Residues 285–302 show a composition bias toward low complexity; sequence SSQMDSSSSMSNPSSSPQ. Residues 323 to 334 are compositionally biased toward polar residues; sequence PLSSHQNHSTHS.

Present in the vegetal pole and marginal zone but not the animal pole of gastrulae and in equal levels in the dorsal and ventral halves of both gastrulae and neurulae. At neurula stage, expressed in the notochord. During tailbud stages, expressed in the foregut, brain, hypocord, neural floor plate and in two lines of cells just dorsal and ventral to the notochord. Expressed in the adult liver.

The protein resides in the nucleus. Its function is as follows. Probable transcription factor. This is Forkhead box protein A1-B (foxa1-b) from Xenopus laevis (African clawed frog).